Consider the following 886-residue polypeptide: Chitin synthase 3 (886 aa).

Disordered regions lie at residues 1 to 70 and 86 to 138; these read MQQG…YQTD and PYEP…AGGG. Over residues 7–17 the composition is skewed to basic and acidic residues; it reads LDDRPYGRPEQ. Over residues 37–56 the composition is skewed to polar residues; it reads PSDQLQLNAAQSVDNLSRNS. Asn51 is a glycosylation site (N-linked (GlcNAc...) asparagine). The segment covering 106 to 122 has biased composition (basic and acidic residues); sequence YDHDDLRPMLPHQDSHA. N-linked (GlcNAc...) asparagine glycosylation occurs at Asn196. 7 consecutive transmembrane segments (helical) span residues 428-448, 526-546, 556-576, 602-622, 637-657, 683-703, and 712-732; these read SAFG…YVAL, RWLN…YQFF, VMLF…WFAV, ILGV…FVLS, MVYF…FIAV, TLIV…FLMF, and FVQY…YAFC. The tract at residues 745–768 is disordered; sequence DQAEKLPSVSTKDGSGKTDLPDES. 2 consecutive transmembrane segments (helical) span residues 813–833 and 858–878; these read VLAW…AAGL and VVLW…MWFL.

This sequence belongs to the chitin synthase family. Class I subfamily.

The protein resides in the cell membrane. It carries out the reaction [(1-&gt;4)-N-acetyl-beta-D-glucosaminyl](n) + UDP-N-acetyl-alpha-D-glucosamine = [(1-&gt;4)-N-acetyl-beta-D-glucosaminyl](n+1) + UDP + H(+). Its function is as follows. Polymerizes chitin, a structural polymer of the cell wall and septum, by transferring the sugar moiety of UDP-GlcNAc to the non-reducing end of the growing chitin polymer. Involved in tolerance to hyperosmotic conditions. CHS3 is the only V.dahliae chitin synthase that is not involved in virulence. The polypeptide is Chitin synthase 3 (Verticillium dahliae (strain VdLs.17 / ATCC MYA-4575 / FGSC 10137) (Verticillium wilt)).